The sequence spans 117 residues: DNA-directed RNA polymerase subunit omega (117 aa).

This sequence belongs to the RNA polymerase subunit omega family. As to quaternary structure, the RNAP catalytic core consists of 2 alpha, 1 beta, 1 beta' and 1 omega subunit. When a sigma factor is associated with the core the holoenzyme is formed, which can initiate transcription.

It catalyses the reaction RNA(n) + a ribonucleoside 5'-triphosphate = RNA(n+1) + diphosphate. Its function is as follows. Promotes RNA polymerase assembly. Latches the N- and C-terminal regions of the beta' subunit thereby facilitating its interaction with the beta and alpha subunits. This chain is DNA-directed RNA polymerase subunit omega, found in Cereibacter sphaeroides (strain ATCC 17029 / ATH 2.4.9) (Rhodobacter sphaeroides).